The sequence spans 526 residues: WRKY transcription factor 72A (526 aa).

Composition is skewed to basic and acidic residues over residues 40–52 and 60–76; these read KERKSIHNEDDNS and LTGDKKDDQLESAKADM. 2 disordered regions span residues 40 to 76 and 170 to 200; these read KERKSIHNEDDNSKSSQQKDLTGDKKDDQLESAKADM and SSTKSSPSNLSPENSLGEVKDDEKGTDQTWP. A coiled-coil region spans residues 62–106; the sequence is GDKKDDQLESAKADMEEVMEENQRLKKHLDKIMKDYRNLQMQFHE. Residues 170–185 are compositionally biased toward low complexity; sequence SSTKSSPSNLSPENSL. Positions 232–298 form a DNA-binding region, WRKY; that stretch reads CDTPTMNDGC…YEGTHNHPLP (67 aa).

It belongs to the WRKY group II-b family. In terms of tissue distribution, expressed in roots, trichomes and fruits.

Its subcellular location is the nucleus. Transcription activator involved in the transcriptional regulation of terpene biosynthesis in glandular trichomes. Binds to the promoter of the linalool synthase TPS5 and promotes TPS5 gene transactivation. In association with WRKY72B, contributes to basal defense against root-knot nematodes (RKNs) and potato aphids, as well as Mi-1-mediated gene-for-gene resistance to these pests. Both WRKY72A and WRKY72B are not required for gene-for-gene resistance mediated by Pto, another tomato R gene. This is WRKY transcription factor 72A from Solanum lycopersicum (Tomato).